Reading from the N-terminus, the 109-residue chain is Antifungal protein ginkbilobin-like protein (109 aa).

Positions 4–109 (TNFVSSACNT…CFIQYEQHSF (106 aa)) constitute a Gnk2-homologous domain. 3 disulfides stabilise this stretch: Cys-11/Cys-87, Cys-63/Cys-72, and Cys-75/Cys-100. Residue Asn-12 coordinates alpha-D-mannopyranose. Residues Arg-94 and Glu-105 each coordinate alpha-D-mannopyranose.

Exerts antifungal activity through its carbohydrate-binding specificity. This is Antifungal protein ginkbilobin-like protein from Picea abies (Norway spruce).